A 486-amino-acid chain; its full sequence is Cardiolipin synthase A (486 aa).

Helical transmembrane passes span 3 to 23 (TFYT…IAGV) and 38 to 58 (MAWL…YLSV). 2 PLD phosphodiesterase domains span residues 219–246 (MDLR…VDPR) and 399–426 (EGGL…DMRS). Active-site residues include His-224, Lys-226, Asp-231, His-404, Lys-406, and Asp-411.

Belongs to the phospholipase D family. Cardiolipin synthase subfamily. ClsA sub-subfamily.

The protein localises to the cell inner membrane. It carries out the reaction 2 a 1,2-diacyl-sn-glycero-3-phospho-(1'-sn-glycerol) = a cardiolipin + glycerol. Functionally, catalyzes the reversible phosphatidyl group transfer from one phosphatidylglycerol molecule to another to form cardiolipin (CL) (diphosphatidylglycerol) and glycerol. The polypeptide is Cardiolipin synthase A (Salmonella gallinarum (strain 287/91 / NCTC 13346)).